The sequence spans 56 residues: Attractin (56 aa).

Intrachain disulfides connect Cys-4–Cys-41, Cys-13–Cys-33, and Cys-20–Cys-26.

In terms of tissue distribution, produced by the albumen gland of the egg cordons.

Its subcellular location is the secreted. In terms of biological role, water-borne pheromone that attract the marine mollusk Aplysia into breeding aggregations and coordinate male and female reproductive behavior within the aggregation. This Aplysia vaccaria (California black sea hare) protein is Attractin (ATT).